The sequence spans 375 residues: MQCALYDAGRCRSCQWITQPIPEQLSAKTADLKNLLADFPVEEWCAPVSGPEQGFRNKAKMVVSGSVEKPLLGMLHRDGTPEDLCDCPLYPASFAPVFAALKPFIARAGLTPYNVARKRGELKYILLTESQSDGGMMLRFVLRSETKLAQLRKALPWLQEQLPQLKVITVNIQPVHMAIMEGETEIYLTEQQALAERFNDVPLWVRPQSFFQTNPAVASQLYATARDWVRQLPVKHMWDLFCGVGGFGLHCATPDMQLTGIEIAPEAIACAKQSAAELGLTRLQFQALDSTQFATAQGEVPELVLVNPPRRGIGKPLCDYLSTMAPRFIIYSSCNAQTMAKDVRELPGYRIERVQLFDMFPHTAHYEVLTLLVKQ.

Positions 3, 11, 14, and 87 each coordinate [4Fe-4S] cluster. Residues Gln212, Phe241, Glu262, and Asn307 each coordinate S-adenosyl-L-methionine. Cys334 (nucleophile) is an active-site residue.

The protein belongs to the class I-like SAM-binding methyltransferase superfamily. RNA M5U methyltransferase family. RlmC subfamily.

The catalysed reaction is uridine(747) in 23S rRNA + S-adenosyl-L-methionine = 5-methyluridine(747) in 23S rRNA + S-adenosyl-L-homocysteine + H(+). Its function is as follows. Catalyzes the formation of 5-methyl-uridine at position 747 (m5U747) in 23S rRNA. In Escherichia coli O9:H4 (strain HS), this protein is 23S rRNA (uracil(747)-C(5))-methyltransferase RlmC.